The sequence spans 568 residues: Protein adenylyltransferase SelO, mitochondrial (568 aa).

ATP is bound by residues G120, G122, R123, K144, D156, G157, R208, and R215. D287 (proton acceptor) is an active-site residue. The Mg(2+) site is built by N288 and D297. ATP is bound at residue D297.

The protein belongs to the SELO family. It depends on Mg(2+) as a cofactor. Forms probably one or more intrachain disulfide bridges.

The protein resides in the mitochondrion. It carries out the reaction L-tyrosyl-[protein] + ATP = O-(5'-adenylyl)-L-tyrosyl-[protein] + diphosphate. Its function is as follows. Catalyzes the transfer of adenosine 5'-monophosphate (AMP) to Tyr residues of target mitochondrial proteins (AMPylation). Involved in redox homeostasis by regulating the cellular response to oxidative stress. Regulates protein S-glutathionylation levels possibly by AMPylation of deglutathionylation enzymes such as glutaredoxins. This is Protein adenylyltransferase SelO, mitochondrial from Schizosaccharomyces pombe (strain 972 / ATCC 24843) (Fission yeast).